A 54-amino-acid chain; its full sequence is Large ribosomal subunit protein bL33 (54 aa).

Belongs to the bacterial ribosomal protein bL33 family.

The chain is Large ribosomal subunit protein bL33 from Frankia alni (strain DSM 45986 / CECT 9034 / ACN14a).